The primary structure comprises 243 residues: Orotidine 5'-phosphate decarboxylase (243 aa).

Substrate contacts are provided by residues D18, K39, D66–T75, T130, R192, Q201, G221, and R222. K68 serves as the catalytic Proton donor.

It belongs to the OMP decarboxylase family. Type 1 subfamily. In terms of assembly, homodimer.

It carries out the reaction orotidine 5'-phosphate + H(+) = UMP + CO2. The protein operates within pyrimidine metabolism; UMP biosynthesis via de novo pathway; UMP from orotate: step 2/2. In terms of biological role, catalyzes the decarboxylation of orotidine 5'-monophosphate (OMP) to uridine 5'-monophosphate (UMP). The sequence is that of Orotidine 5'-phosphate decarboxylase from Synechococcus sp. (strain WH7803).